Consider the following 826-residue polypeptide: Dolichyl-diphosphooligosaccharide--protein glycosyltransferase subunit STT3B (826 aa).

Residues 1–60 (MAEPSAPESKHKSSLNSSPWSGLMALGNSRHGHHGPGAQCAHKAAGGVAPPKPAPAGLSG) form a disordered region. Residue Ala2 is modified to N-acetylalanine. Residues 2–41 (AEPSAPESKHKSSLNSSPWSGLMALGNSRHGHHGPGAQCA) are Cytoplasmic-facing. Residues Ser13, Ser18, and Ser29 each carry the phosphoserine modification. The chain crosses the membrane as a helical span at residues 42–86 (HKAAGGVAPPKPAPAGLSGGLSQPAGWQSLLSFTILFLAWLAGFS). Residues 87-173 (SRLFAVIRFE…VHIRDVCVFL (87 aa)) are Lumenal-facing. A DXD motif 1 motif is present at residues 101-103 (EFD). Asp103 contributes to the Mn(2+) binding site. The chain crosses the membrane as a helical span at residues 174-192 (APTFSGLTSISTFLLTREL). Residues 193 to 194 (WN) lie on the Cytoplasmic side of the membrane. Residues 195 to 212 (QGAGLLAACFIAIVPGYI) form a helical membrane-spanning segment. Topologically, residues 213–223 (SRSVAGSFDNE) are lumenal. Positions 221 and 223 each coordinate Mn(2+). The DXD motif 2 motif lies at 221–223 (DNE). Residues 224–243 (GIAIFALQFTYYLWVKSVKT) traverse the membrane as a helical segment. The Cytoplasmic segment spans residues 244 to 245 (GS). A helical transmembrane segment spans residues 246–260 (VFWTMCCCLSYFYMV). The Lumenal portion of the chain corresponds to 261–265 (SAWGG). A helical membrane pass occupies residues 266 to 282 (YVFIINLIPLHVFVLLL). Topologically, residues 283-287 (MQRYS) are cytoplasmic. A helical transmembrane segment spans residues 288–313 (KRVYIAYSTFYIVGLILSMQIPFVGF). Over 314-321 (QPIRTSEH) the chain is Lumenal. The helical transmembrane segment at 322 to 341 (MAAAGVFALLQAYAFLQYLR) threads the bilayer. Topologically, residues 342-350 (DRLTKQEFQ) are cytoplasmic. The helical transmembrane segment at 351 to 371 (TLFFLGVSLAAGAVFLSVIYL) threads the bilayer. The Lumenal portion of the chain corresponds to 372-410 (TYTGYIAPWSGRFYSLWDTGYAKIHIPIIASVSEHQPTT). An SVSE motif motif is present at residues 402 to 405 (SVSE). The helical transmembrane segment at 411 to 433 (WVSFFFDLHILVCTFPAGLWFCI) threads the bilayer. Residues 434 to 439 (KNINDE) lie on the Cytoplasmic side of the membrane. The chain crosses the membrane as a helical span at residues 440 to 456 (RVFVALYAISAVYFAGV). Residues 457–460 (MVRL) are Lumenal-facing. Arg459 contacts dolichyl diphosphooligosaccharide. Residues 461–482 (MLTLTPVVCMLSAIAFSNVFEH) traverse the membrane as a helical segment. Residues 483-526 (YLGDDMKRENPPVEDSSDEDDKRNPGNLYDKAGKVRKHVTEQEK) lie on the Cytoplasmic side of the membrane. Positions 490-512 (RENPPVEDSSDEDDKRNPGNLYD) are disordered. Phosphoserine occurs at positions 498 and 499. A helical transmembrane segment spans residues 527 to 552 (TEEGLGPNIKSIVTMLMLMLLMMFAV). The Lumenal portion of the chain corresponds to 553-826 (HCTWVTSNAY…KGKKISKKTV (274 aa)). The interacts with target acceptor peptide in protein substrate stretch occupies residues 604–606 (WWD). A WWDYG motif motif is present at residues 604–608 (WWDYG). Residue Tyr609 participates in dolichyl diphosphooligosaccharide binding. N-linked (GlcNAc...) asparagine glycans are attached at residues Asn616 and Asn623. Residue Asn627 is glycosylated (N-linked (GlcNAc...) (high mannose) asparagine). The N-linked (GlcNAc...) asparagine glycan is linked to Asn641. The DK motif motif lies at 671 to 678 (DINKFLWM).

The protein belongs to the STT3 family. As to quaternary structure, component of the oligosaccharyltransferase (OST) complex. There are 2 OST complexes, OST-A and OST-B, which contain STT3A or STT3B as catalytic subunit, respectively. OST-A and OST-B contain common core subunits RPN1, RPN2, OST48, OST4, DAD1 and TMEM258, and OST-B contains either MAGT1 or TUSC3 as specific accessory subunit. Mg(2+) is required as a cofactor. The cofactor is Mn(2+).

The protein resides in the endoplasmic reticulum. It localises to the endoplasmic reticulum membrane. It carries out the reaction a di-trans,poly-cis-dolichyl diphosphooligosaccharide + L-asparaginyl-[protein] = N(4)-(oligosaccharide-(1-&gt;4)-N-acetyl-beta-D-glucosaminyl-(1-&gt;4)-N-acetyl-beta-D-glucosaminyl)-L-asparaginyl-[protein] + a di-trans,poly-cis-dolichyl diphosphate + H(+). Its pathway is protein modification; protein glycosylation. Its function is as follows. Catalytic subunit of the oligosaccharyl transferase (OST) complex that catalyzes the initial transfer of a defined glycan (Glc(3)Man(9)GlcNAc(2) in eukaryotes) from the lipid carrier dolichol-pyrophosphate to an asparagine residue within an Asn-X-Ser/Thr consensus motif in nascent polypeptide chains, the first step in protein N-glycosylation. N-glycosylation occurs cotranslationally and the complex associates with the Sec61 complex at the channel-forming translocon complex that mediates protein translocation across the endoplasmic reticulum (ER). All subunits are required for a maximal enzyme activity. This subunit contains the active site and the acceptor peptide and donor lipid-linked oligosaccharide (LLO) binding pockets. STT3B is present in a small subset of OST complexes and mediates both cotranslational and post-translational N-glycosylation of target proteins: STT3B-containing complexes are required for efficient post-translational glycosylation and while they are less competent than STT3A-containing complexes for cotranslational glycosylation, they have the ability to mediate glycosylation of some nascent sites that are not accessible for STT3A. STT3B-containing complexes also act post-translationally and mediate modification of skipped glycosylation sites in unfolded proteins. Plays a role in ER-associated degradation (ERAD) pathway that mediates ubiquitin-dependent degradation of misfolded endoplasmic reticulum proteins by mediating N-glycosylation of unfolded proteins, which are then recognized by the ERAD pathway and targeted for degradation. This chain is Dolichyl-diphosphooligosaccharide--protein glycosyltransferase subunit STT3B, found in Canis lupus familiaris (Dog).